We begin with the raw amino-acid sequence, 63 residues long: Cytochrome c oxidase subunit 7C, mitochondrial (63 aa).

The N-terminal 16 residues, 1-16, are a transit peptide targeting the mitochondrion; the sequence is MLGQSIRRFTTSVVRR. The Mitochondrial matrix segment spans residues 17–33; that stretch reads SHYEEGPGKNIPFSVEN. K25 bears the N6-acetyllysine; alternate mark. K25 carries the N6-succinyllysine; alternate modification. The helical transmembrane segment at 34-60 threads the bilayer; it reads KWRLLAMMTLFFGSGFAAPFFIVRHQL. Residues 61–63 lie on the Mitochondrial intermembrane side of the membrane; it reads LKK.

It belongs to the cytochrome c oxidase VIIc family. In terms of assembly, component of the cytochrome c oxidase (complex IV, CIV), a multisubunit enzyme composed of 14 subunits. The complex is composed of a catalytic core of 3 subunits MT-CO1, MT-CO2 and MT-CO3, encoded in the mitochondrial DNA, and 11 supernumerary subunits COX4I1 (or COX4I2), COX5A, COX5B, COX6A2 (or COX6A1), COX6B1 (or COX6B2), COX6C, COX7A1 (or COX7A2), COX7B, COX7C, COX8B and NDUFA4, which are encoded in the nuclear genome. The complex exists as a monomer or a dimer and forms supercomplexes (SCs) in the inner mitochondrial membrane with NADH-ubiquinone oxidoreductase (complex I, CI) and ubiquinol-cytochrome c oxidoreductase (cytochrome b-c1 complex, complex III, CIII), resulting in different assemblies (supercomplex SCI(1)III(2)IV(1) and megacomplex MCI(2)III(2)IV(2)). Interacts with RAB5IF. Liver, heart, muscle and brain, contain the same isoform of COX VIIc, but at different concentrations.

Its subcellular location is the mitochondrion inner membrane. It participates in energy metabolism; oxidative phosphorylation. Its function is as follows. Component of the cytochrome c oxidase, the last enzyme in the mitochondrial electron transport chain which drives oxidative phosphorylation. The respiratory chain contains 3 multisubunit complexes succinate dehydrogenase (complex II, CII), ubiquinol-cytochrome c oxidoreductase (cytochrome b-c1 complex, complex III, CIII) and cytochrome c oxidase (complex IV, CIV), that cooperate to transfer electrons derived from NADH and succinate to molecular oxygen, creating an electrochemical gradient over the inner membrane that drives transmembrane transport and the ATP synthase. Cytochrome c oxidase is the component of the respiratory chain that catalyzes the reduction of oxygen to water. Electrons originating from reduced cytochrome c in the intermembrane space (IMS) are transferred via the dinuclear copper A center (CU(A)) of subunit 2 and heme A of subunit 1 to the active site in subunit 1, a binuclear center (BNC) formed by heme A3 and copper B (CU(B)). The BNC reduces molecular oxygen to 2 water molecules using 4 electrons from cytochrome c in the IMS and 4 protons from the mitochondrial matrix. The chain is Cytochrome c oxidase subunit 7C, mitochondrial (COX7C) from Bos taurus (Bovine).